Consider the following 276-residue polypeptide: Dermonecrotic toxin LlSicTox-alphaIV2ii (276 aa).

His5 is a catalytic residue. Residues Glu25 and Asp27 each coordinate Mg(2+). His41 (nucleophile) is an active-site residue. 2 disulfide bridges follow: Cys45/Cys51 and Cys47/Cys193. Position 85 (Asp85) interacts with Mg(2+).

The protein belongs to the arthropod phospholipase D family. Class II subfamily. Mg(2+) serves as cofactor. Expressed by the venom gland.

Its subcellular location is the secreted. It catalyses the reaction an N-(acyl)-sphingosylphosphocholine = an N-(acyl)-sphingosyl-1,3-cyclic phosphate + choline. The enzyme catalyses an N-(acyl)-sphingosylphosphoethanolamine = an N-(acyl)-sphingosyl-1,3-cyclic phosphate + ethanolamine. The catalysed reaction is a 1-acyl-sn-glycero-3-phosphocholine = a 1-acyl-sn-glycero-2,3-cyclic phosphate + choline. It carries out the reaction a 1-acyl-sn-glycero-3-phosphoethanolamine = a 1-acyl-sn-glycero-2,3-cyclic phosphate + ethanolamine. In terms of biological role, dermonecrotic toxins cleave the phosphodiester linkage between the phosphate and headgroup of certain phospholipids (sphingolipid and lysolipid substrates), forming an alcohol (often choline) and a cyclic phosphate. This toxin acts on sphingomyelin (SM). It may also act on ceramide phosphoethanolamine (CPE), lysophosphatidylcholine (LPC) and lysophosphatidylethanolamine (LPE), but not on lysophosphatidylserine (LPS), and lysophosphatidylglycerol (LPG). It acts by transphosphatidylation, releasing exclusively cyclic phosphate products as second products. Induces dermonecrosis, hemolysis, increased vascular permeability, edema, inflammatory response, and platelet aggregation. In Loxosceles laeta (South American recluse spider), this protein is Dermonecrotic toxin LlSicTox-alphaIV2ii.